An 858-amino-acid polypeptide reads, in one-letter code: G2-specific protein kinase nim-1 (858 aa).

The Protein kinase domain occupies 7-290 (YELLEKIGHG…TATLLNLPIV (284 aa)). ATP-binding positions include 13 to 21 (IGHGSFGII) and Lys36. The Proton acceptor role is filled by Asp161. Thr194 is modified (phosphothreonine; by autocatalysis). Positions 291 to 383 (RLMRKEKEVV…QARVEAELQR (93 aa)) form a coiled coil. 2 disordered regions span residues 495-693 (TKAP…LPQA) and 747-858 (SAVD…LSQS). Residues 516–525 (SNWEVPRETE) are compositionally biased toward basic and acidic residues. Acidic residues predominate over residues 526-535 (MIDSGDESEA). Composition is skewed to polar residues over residues 548–572 (SSKNPFSTVTTRSRPSLNSQQNSNV) and 580–598 (SKQTLATRSKTVSGVSSIG). Positions 636 to 648 (SANNINNSSNGGS) are enriched in low complexity. Over residues 650-661 (APSSTVTSNITV) the composition is skewed to polar residues. Positions 676-691 (SSFSQQQNNQPQQSLP) are enriched in low complexity. Over residues 760 to 780 (GQSQLPTRPRSQPQPITANFE) the composition is skewed to polar residues. Residues 781 to 802 (QQQQQQQSNTNSISSSNSAGSG) are compositionally biased toward low complexity.

Belongs to the protein kinase superfamily. CAMK Ser/Thr protein kinase family.

The protein localises to the nucleus. The enzyme catalyses L-seryl-[protein] + ATP = O-phospho-L-seryl-[protein] + ADP + H(+). It carries out the reaction L-threonyl-[protein] + ATP = O-phospho-L-threonyl-[protein] + ADP + H(+). Protein kinase that plays an important role in mitotic regulation. This chain is G2-specific protein kinase nim-1 (nim-1), found in Neurospora crassa (strain ATCC 24698 / 74-OR23-1A / CBS 708.71 / DSM 1257 / FGSC 987).